Consider the following 862-residue polypeptide: uncharacterized protein (862 aa).

Disordered stretches follow at residues H45–V91, R633–D824, and G837–S862. 2 stretches are compositionally biased toward acidic residues: residues M57–E69 and P78–V91. 3 stretches are compositionally biased toward basic and acidic residues: residues R633–K650, R657–K686, and T694–T703. Residues E751–K760 are compositionally biased toward basic residues. The span at K761–S779 shows a compositional bias: basic and acidic residues.

This is an uncharacterized protein from Ictaluridae (bullhead catfishes).